The following is a 158-amino-acid chain: Small ribosomal subunit protein bS16 (158 aa).

Positions 111 to 121 are enriched in low complexity; the sequence is AAAGLAEAPTK. Residues 111–158 form a disordered region; sequence AAAGLAEAPTKPAKKAPKAEAAPKTEAAPKADAPKTEEQAGAGSGEQG. The segment covering 127 to 148 has biased composition (basic and acidic residues); the sequence is PKAEAAPKTEAAPKADAPKTEE.

Belongs to the bacterial ribosomal protein bS16 family.

The protein is Small ribosomal subunit protein bS16 of Salinispora arenicola (strain CNS-205).